A 613-amino-acid chain; its full sequence is 9-cis-epoxycarotenoid dioxygenase NCED5, chloroplastic (613 aa).

Residues 1–15 (MPTTFTPNSPASSCS) are compositionally biased toward polar residues. A chloroplast-targeting transit peptide spans 1–36 (MPTTFTPNSPASSCSIHHRASPSRGARNSVRFTRPR). Positions 1-62 (MPTTFTPNSP…PPAYVPPPPP (62 aa)) are disordered. Over residues 37 to 50 (AAAAATNSVLSAPS) the composition is skewed to low complexity. The span at 51 to 62 (SVPPAYVPPPPP) shows a compositional bias: pro residues. Residues His-305, His-354, His-419, and His-600 each coordinate Fe cation.

This sequence belongs to the carotenoid oxygenase family. It depends on Fe(2+) as a cofactor.

The protein localises to the plastid. It localises to the chloroplast. It catalyses the reaction a 9-cis-epoxycarotenoid + O2 = a 12'-apo-carotenal + 2-cis,4-trans-xanthoxin. The catalysed reaction is 9-cis-violaxanthin + O2 = (3S,5R,6S)-5,6-epoxy-3-hydroxy-5,6-dihydro-12'-apo-beta-caroten-12'-al + 2-cis,4-trans-xanthoxin. It carries out the reaction 9'-cis-neoxanthin + O2 = (3S,5R,6R)-3,5-dihydroxy-6,7-didehydro-5,6-dihydro-12'-apo-beta-caroten-12'-al + 2-cis,4-trans-xanthoxin. Its function is as follows. Has a 11,12(11',12') 9-cis epoxycarotenoid cleavage activity. Catalyzes the first step of abscisic-acid biosynthesis from carotenoids. The chain is 9-cis-epoxycarotenoid dioxygenase NCED5, chloroplastic from Oryza sativa subsp. japonica (Rice).